The following is a 101-amino-acid chain: Apolipoprotein C-II (101 aa).

The N-terminal stretch at 1–22 (MGTRFLLALFLVLLVLGLEVQA) is a signal peptide. Residues 66 to 74 (AVDERIRDM) are lipid binding. Residues 78 to 101 (STAAVTTYAGIFTDQLFSMLKGEQ) form a lipoprotein lipase cofactor region.

This sequence belongs to the apolipoprotein C2 family. Proapolipoprotein C-II is synthesized as a sialic acid containing glycoprotein which is subsequently desialylated prior to its proteolytic processing. Post-translationally, proapolipoprotein C-II, the major form found in plasma undergoes proteolytic cleavage of its N-terminal hexapeptide to generate apolipoprotein C-II, which occurs as the minor form in plasma.

The protein localises to the secreted. Its function is as follows. Component of chylomicrons, very low-density lipoproteins (VLDL), low-density lipoproteins (LDL), and high-density lipoproteins (HDL) in plasma. Plays an important role in lipoprotein metabolism as an activator of lipoprotein lipase. Both proapolipoprotein C-II and apolipoprotein C-II can activate lipoprotein lipase. The protein is Apolipoprotein C-II (APOC2) of Tupaia glis (Common tree shrew).